The following is a 535-amino-acid chain: Berberine bridge enzyme-like 27 (535 aa).

The N-terminal stretch at 1 to 22 (MEILRFLLSLFIYFLLLNLSLS) is a signal peptide. N-linked (GlcNAc...) asparagine glycosylation is found at Asn18 and Asn66. Cys40 and Cys100 are oxidised to a cystine. An FAD-binding PCMH-type domain is found at 78–253 (ETPKPVSIIT…LSWKIRLLDV (176 aa)). His115 bears the Pros-8alpha-FAD histidine mark. Asn146, Asn215, and Asn439 each carry an N-linked (GlcNAc...) asparagine glycan.

This sequence belongs to the oxygen-dependent FAD-linked oxidoreductase family. FAD serves as cofactor. As to expression, accumulates in cell walls of etiolated hypocotyls.

It localises to the secreted. It is found in the cell wall. In Arabidopsis thaliana (Mouse-ear cress), this protein is Berberine bridge enzyme-like 27.